A 327-amino-acid polypeptide reads, in one-letter code: Methionyl-tRNA formyltransferase (327 aa).

117 to 120 (SLLP) lines the (6S)-5,6,7,8-tetrahydrofolate pocket.

The protein belongs to the Fmt family.

It carries out the reaction L-methionyl-tRNA(fMet) + (6R)-10-formyltetrahydrofolate = N-formyl-L-methionyl-tRNA(fMet) + (6S)-5,6,7,8-tetrahydrofolate + H(+). Functionally, attaches a formyl group to the free amino group of methionyl-tRNA(fMet). The formyl group appears to play a dual role in the initiator identity of N-formylmethionyl-tRNA by promoting its recognition by IF2 and preventing the misappropriation of this tRNA by the elongation apparatus. The polypeptide is Methionyl-tRNA formyltransferase (Delftia acidovorans (strain DSM 14801 / SPH-1)).